Here is a 405-residue protein sequence, read N- to C-terminus: Acetate kinase (405 aa).

Position 7 (Asn7) interacts with Mg(2+). Lys14 is an ATP binding site. Residue Arg90 participates in substrate binding. Asp147 (proton donor/acceptor) is an active-site residue. ATP-binding positions include 207-211, 282-284, and 331-335; these read HLGNG, DFR, and GVGEN. Glu384 contributes to the Mg(2+) binding site.

The protein belongs to the acetokinase family. In terms of assembly, homodimer. It depends on Mg(2+) as a cofactor. Requires Mn(2+) as cofactor.

The protein resides in the cytoplasm. It catalyses the reaction acetate + ATP = acetyl phosphate + ADP. The protein operates within metabolic intermediate biosynthesis; acetyl-CoA biosynthesis; acetyl-CoA from acetate: step 1/2. Catalyzes the formation of acetyl phosphate from acetate and ATP. Can also catalyze the reverse reaction. The chain is Acetate kinase from Clostridium kluyveri (strain ATCC 8527 / DSM 555 / NBRC 12016 / NCIMB 10680 / K1).